The primary structure comprises 315 residues: Olfactory receptor 56A3 (315 aa).

Residues 1-29 are Extracellular-facing; it reads MTTHRNDTLSTEASDFLLNCFVRSPSWQH. A glycan (N-linked (GlcNAc...) asparagine) is linked at asparagine 6. A helical transmembrane segment spans residues 30–50; it reads WLSLPLSLLFLLAVGANTTLL. Residues 51 to 58 lie on the Cytoplasmic side of the membrane; that stretch reads MTIWLEAS. Residues 59–79 form a helical membrane-spanning segment; that stretch reads LHQPLYYLLSLLSLLDIVLCL. Residues 80–103 lie on the Extracellular side of the membrane; the sequence is TVIPKVLTIFWFDLRPISFPACFL. Cysteine 101 and cysteine 193 are disulfide-bonded. The chain crosses the membrane as a helical span at residues 104-124; that stretch reads QMYIMNCFLAMESCTFMVMAY. The Cytoplasmic segment spans residues 125 to 143; sequence DRYVAICHPLRYPSIITDH. A helical transmembrane segment spans residues 144-164; that stretch reads FVVKAAMFILTRNVLMTLPIP. Residues 165 to 200 lie on the Extracellular side of the membrane; sequence ILSAQLRYCGRNVIENCICANMSVSRLSCDDVTINH. N-linked (GlcNAc...) asparagine glycosylation is present at asparagine 185. Residues 201-221 traverse the membrane as a helical segment; that stretch reads LYQFAGGWTLLGSDLILIFLS. Residues 222–241 lie on the Cytoplasmic side of the membrane; that stretch reads YTFILRAVLRLKAEGAVAKA. A helical membrane pass occupies residues 242–262; that stretch reads LSTCGSHFMLILFFSTILLVF. Residues 263–277 are Extracellular-facing; that stretch reads VLTHVAKKKVSPDVP. Residues 278 to 298 form a helical membrane-spanning segment; it reads VLLNVLHHVIPAALNPIIYGV. The Cytoplasmic segment spans residues 299–315; the sequence is RTQEIKQGMQRLLKKGC.

Belongs to the G-protein coupled receptor 1 family.

It is found in the cell membrane. In terms of biological role, odorant receptor. The sequence is that of Olfactory receptor 56A3 (OR56A3) from Homo sapiens (Human).